The chain runs to 210 residues: RNA chaperone ProQ (210 aa).

The segment at 118–146 (KAAKPEKKRPARRVAAKGQHAKETTTNKA) is disordered. Basic residues predominate over residues 123 to 132 (EKKRPARRVA).

It belongs to the ProQ family.

The protein localises to the cytoplasm. Functionally, RNA chaperone with significant RNA binding, RNA strand exchange and RNA duplexing activities. The chain is RNA chaperone ProQ from Pasteurella multocida (strain Pm70).